Reading from the N-terminus, the 473-residue chain is Glycine--tRNA ligase (473 aa).

Substrate-binding residues include R101 and E172. Residues 204–206 (RNE), 214–219 (FRTREF), 289–290 (EL), and 333–336 (GVER) each bind ATP. Position 219–223 (219–223 (FEQME)) interacts with substrate. 329-333 (EPSVG) lines the substrate pocket.

It belongs to the class-II aminoacyl-tRNA synthetase family. Homodimer.

The protein localises to the cytoplasm. The catalysed reaction is tRNA(Gly) + glycine + ATP = glycyl-tRNA(Gly) + AMP + diphosphate. Its function is as follows. Catalyzes the attachment of glycine to tRNA(Gly). The polypeptide is Glycine--tRNA ligase (Ureaplasma parvum serovar 3 (strain ATCC 27815 / 27 / NCTC 11736)).